A 490-amino-acid polypeptide reads, in one-letter code: Metal cation symporter ZIP14 (490 aa).

The first 28 residues, 1-28, serve as a signal peptide directing secretion; that stretch reads MELLRPALPSYFLLTLLSIWTAASEARA. Topologically, residues 29–155 are extracellular; the sequence is VSTGMPTISA…PSSVEVWGYG (127 aa). N-linked (GlcNAc...) asparagine glycans are attached at residues N75, N85, and N100. A disordered region spans residues 127-146; that stretch reads ACSSENQENEENEQTEEGRP. Residues 156–176 form a helical membrane-spanning segment; it reads LLCVTVISLCSLLGASVVPFM. The Cytoplasmic portion of the chain corresponds to 177-184; that stretch reads KKTFYKRL. Residues 185–205 traverse the membrane as a helical segment; it reads LLYFIALAIGTLYSNALFQLI. Topologically, residues 206 to 222 are extracellular; the sequence is PEAFGFNPMEDYYVSKS. A helical membrane pass occupies residues 223-243; sequence AVVFGGFYLFFFTEKILKMLL. Residues 244–395 lie on the Cytoplasmic side of the membrane; that stretch reads KQKNEHHHGH…LLNAGMSLQQ (152 aa). The HHHGHXHX-motif motif lies at 249–256; that stretch reads HHHGHSHY. The XEXPHE-motif signature appears at 374 to 379; it reads EEFPHE. The chain crosses the membrane as a helical span at residues 396-416; sequence ALFFNFLSACCCYVGLGFGIL. The Extracellular portion of the chain corresponds to 417–422; sequence AGSHFS. The chain crosses the membrane as a helical span at residues 423–443; that stretch reads ANWIFALAGGMFLYISLADMF. Over 444 to 459 the chain is Cytoplasmic; it reads PEMNEVSQEDERKGSA. Residues 460 to 480 form a helical membrane-spanning segment; it reads LIPFVIQNLGLLTGFGIMLVL. The Extracellular portion of the chain corresponds to 481-490; the sequence is TMYSGHIQIG.

Belongs to the ZIP transporter (TC 2.A.5) family. As to quaternary structure, homotrimer. Post-translationally, ubiquitinated. Ubiquitination occurs upon iron depletion. The ubiquitinated form undergoes proteasomal degradation. In terms of processing, N-glycosylated. N-glycosylation at Asn-100 is required for iron-regulated extraction of the transporter from membranes and subsequent proteasomal degradation.

It is found in the cell membrane. It localises to the apical cell membrane. The protein localises to the basolateral cell membrane. Its subcellular location is the early endosome membrane. The protein resides in the late endosome membrane. It is found in the lysosome membrane. It catalyses the reaction Zn(2+)(out) + 2 hydrogencarbonate(out) = Zn(2+)(in) + 2 hydrogencarbonate(in). It carries out the reaction Mn(2+)(out) + 2 hydrogencarbonate(out) = Mn(2+)(in) + 2 hydrogencarbonate(in). The enzyme catalyses Fe(2+)(out) + 2 hydrogencarbonate(out) = Fe(2+)(in) + 2 hydrogencarbonate(in). The catalysed reaction is Cd(2+)(out) + 2 hydrogencarbonate(out) = Cd(2+)(in) + 2 hydrogencarbonate(in). In terms of biological role, electroneutral transporter of the plasma membrane mediating the cellular uptake of the divalent metal cations zinc, manganese and iron that are important for tissue homeostasis, metabolism, development and immunity. Functions as an energy-dependent symporter, transporting through the membranes an electroneutral complex composed of a divalent metal cation and two bicarbonate anions. Beside these endogenous cellular substrates, can also import cadmium a non-essential metal which is cytotoxic and carcinogenic. The protein is Metal cation symporter ZIP14 of Bos taurus (Bovine).